Reading from the N-terminus, the 633-residue chain is Breast carcinoma-amplified sequence 1 homolog (633 aa).

Disordered regions lie at residues 1–34 (MGNQ…CVQN) and 57–422 (SSKD…KLFW). 2 stretches are compositionally biased toward polar residues: residues 24–34 (KVTSDNECVQN) and 57–68 (SSKDNVATSSPK). A Phosphoserine modification is found at S127. The span at 278–288 (VDTTENSSSIM) shows a compositional bias: polar residues. Positions 300 to 318 (TETKKDPEDTKATKADSVC) are enriched in basic and acidic residues. A Phosphoserine modification is found at S328. T330 carries the post-translational modification Phosphothreonine. Polar residues predominate over residues 359–378 (NSPTTSANLKSDKANFTPQE). S360 is modified (phosphoserine). Residues 400–410 (SEGRDSGKEKA) are compositionally biased toward basic and acidic residues. S425 and S443 each carry phosphoserine. Residues 454 to 633 (ESSLQTVDLS…VSIGPVGKSK (180 aa)) form a disordered region. The span at 471–481 (TDVKVKEESKP) shows a compositional bias: basic and acidic residues. Over residues 510–522 (KDSSCQTSNSVEK) the composition is skewed to polar residues. Residue T523 is modified to Phosphothreonine. S525 carries the phosphoserine modification. A compositionally biased stretch (basic and acidic residues) spans 537-555 (KNKETSSSKDKKSVDKKSA). S601 and S615 each carry phosphoserine. The interacts with DYNLL1 AND DYNLL2 stretch occupies residues 614–633 (MSDAQVQTDPVSIGPVGKSK).

Homodimer. Interacts with DYNLL1 and DYNLL2. As to expression, highly expressed in the brain and, more specifically, in oligodendrocytes. Expressed in the Schwann cells (at protein level).

It is found in the cytoplasm. In terms of biological role, required for myelination. This is Breast carcinoma-amplified sequence 1 homolog (Bcas1) from Mus musculus (Mouse).